The chain runs to 268 residues: Putative S-adenosyl-L-methionine-dependent methyltransferase MAP_0663 (268 aa).

S-adenosyl-L-methionine contacts are provided by residues Asp-124 and 153–154; that span reads DL.

This sequence belongs to the UPF0677 family.

Functionally, exhibits S-adenosyl-L-methionine-dependent methyltransferase activity. The polypeptide is Putative S-adenosyl-L-methionine-dependent methyltransferase MAP_0663 (Mycolicibacterium paratuberculosis (strain ATCC BAA-968 / K-10) (Mycobacterium paratuberculosis)).